The primary structure comprises 200 residues: GTP cyclohydrolase-2 (200 aa).

Residue 49–53 coordinates GTP; it reads RVHSE. Cysteine 54, cysteine 65, and cysteine 67 together coordinate Zn(2+). GTP contacts are provided by residues glutamine 70, 92 to 94, and threonine 114; that span reads EGR. Catalysis depends on aspartate 126, which acts as the Proton acceptor. Arginine 128 acts as the Nucleophile in catalysis. Residues threonine 149 and lysine 154 each contribute to the GTP site.

This sequence belongs to the GTP cyclohydrolase II family. As to quaternary structure, homodimer. Zn(2+) serves as cofactor.

It catalyses the reaction GTP + 4 H2O = 2,5-diamino-6-hydroxy-4-(5-phosphoribosylamino)-pyrimidine + formate + 2 phosphate + 3 H(+). It functions in the pathway cofactor biosynthesis; riboflavin biosynthesis; 5-amino-6-(D-ribitylamino)uracil from GTP: step 1/4. Functionally, catalyzes the conversion of GTP to 2,5-diamino-6-ribosylamino-4(3H)-pyrimidinone 5'-phosphate (DARP), formate and pyrophosphate. In Klebsiella pneumoniae subsp. pneumoniae (strain ATCC 700721 / MGH 78578), this protein is GTP cyclohydrolase-2.